We begin with the raw amino-acid sequence, 52 residues long: UPF0057 membrane protein YqaE (52 aa).

Transmembrane regions (helical) follow at residues 1–21 (MGFWRIVITIILPPLGVLLGK) and 23–43 (FGWAFIINILLTLLGYIPGLI).

Belongs to the UPF0057 (PMP3) family.

It localises to the cell membrane. This Escherichia coli O157:H7 protein is UPF0057 membrane protein YqaE (yqaE).